The sequence spans 430 residues: Chaperone SurA (430 aa).

An N-terminal signal peptide occupies residues 1–25 (MQIIKTTIATFTAIAFTGAASFTSA). PpiC domains lie at 176 to 277 (SPDY…KLYE) and 286 to 385 (VNQT…KVEE).

It localises to the periplasm. The catalysed reaction is [protein]-peptidylproline (omega=180) = [protein]-peptidylproline (omega=0). In terms of biological role, chaperone involved in the correct folding and assembly of outer membrane proteins. Recognizes specific patterns of aromatic residues and the orientation of their side chains, which are found more frequently in integral outer membrane proteins. May act in both early periplasmic and late outer membrane-associated steps of protein maturation. The protein is Chaperone SurA of Saccharophagus degradans (strain 2-40 / ATCC 43961 / DSM 17024).